A 528-amino-acid chain; its full sequence is Abrin-d (528 aa).

Pyrrolidone carboxylic acid is present on glutamine 1. Glutamate 164 is a catalytic residue. An N-linked (GlcNAc...) asparagine glycan is attached at asparagine 200. 3 disulfide bridges follow: cysteine 247–cysteine 269, cysteine 286–cysteine 305, and cysteine 329–cysteine 346. Residues 273 to 400 (YEPTVRIGGR…YLMRQGWRTG (128 aa)) enclose the Ricin B-type lectin 1 domain. One copy of the 1-alpha repeat lies at 283–325 (DGMCVDVYDDGYHNGNRIIAWKCKDRLEENQLWTLKSDLTIRS). One copy of the 1-beta repeat lies at 326-366 (NGKCLTTEGYAPGNYVMIYDCTSAVAEATYWEIWDNGTIIN). N-linked (GlcNAc...) asparagine glycans are attached at residues asparagine 361 and asparagine 401. The 1-gamma repeat unit spans residues 369 to 401 (SALVLSAESSSMGGTLTVQTNEYLMRQGWRTGN). The region spanning 403–527 (TSPFVTSISG…GKPNQIWLTL (125 aa)) is the Ricin B-type lectin 2 domain. The stretch at 414 to 449 (SDLCMQAQGSNVWLADCDNNKKEQQWALYTDGSIRS) is one 2-alpha repeat. 2 cysteine pairs are disulfide-bonded: cysteine 417/cysteine 430 and cysteine 456/cysteine 473. A 2-beta repeat occupies 453–492 (TNNCLTSKDHKQGSPIVLMACSNGWASQRWLFKNDGSIYS). Residues 495-528 (DDMVMDVKGSDPSLKQIILWPYTGKPNQIWLTLF) form a 2-gamma repeat.

This sequence in the N-terminal section; belongs to the ribosome-inactivating protein family. Type 2 RIP subfamily. Disulfide-linked dimer of A and B chains.

It catalyses the reaction Endohydrolysis of the N-glycosidic bond at one specific adenosine on the 28S rRNA.. The A chain is responsible for inhibiting protein synthesis through the catalytic inactivation of 60S ribosomal subunits by removing adenine from position 4,324 of 28S rRNA. Functionally, the B chain is a galactose-specific lectin that facilitates the binding of abrin to the cell membrane that precedes endocytosis. This Abrus precatorius (Indian licorice) protein is Abrin-d.